We begin with the raw amino-acid sequence, 149 residues long: Gamma-glutamylaminecyclotransferase (149 aa).

7–10 (YGTL) serves as a coordination point for substrate. E82 (proton acceptor) is an active-site residue.

Belongs to the gamma-glutamylcyclotransferase family. Monomer.

The enzyme catalyses epsilon-(gamma-L-glutamyl)-L-lysine = 5-oxo-L-proline + L-lysine. Contributes to degradation of proteins cross-linked by transglutaminases by degrading the cross-link between a lysine and a glutamic acid residue. Catalyzes the formation of 5-oxo-L-proline from L-gamma-glutamyl-L-epsilon-lysine. Inactive with L-gamma-glutamyl-alpha-amino acid substrates such as L-gamma-glutamyl-L-alpha-cysteine and L-gamma-glutamyl-L-alpha-alanine. This chain is Gamma-glutamylaminecyclotransferase (Ggact), found in Mus musculus (Mouse).